A 318-amino-acid polypeptide reads, in one-letter code: Aspartate carbamoyltransferase catalytic subunit (318 aa).

2 residues coordinate carbamoyl phosphate: R58 and T59. K86 contributes to the L-aspartate binding site. Carbamoyl phosphate is bound by residues R108, H141, and Q144. L-aspartate is bound by residues R174 and R226. Residues G270 and P271 each coordinate carbamoyl phosphate.

Belongs to the aspartate/ornithine carbamoyltransferase superfamily. ATCase family. Heterododecamer (2C3:3R2) of six catalytic PyrB chains organized as two trimers (C3), and six regulatory PyrI chains organized as three dimers (R2).

It carries out the reaction carbamoyl phosphate + L-aspartate = N-carbamoyl-L-aspartate + phosphate + H(+). The protein operates within pyrimidine metabolism; UMP biosynthesis via de novo pathway; (S)-dihydroorotate from bicarbonate: step 2/3. Its function is as follows. Catalyzes the condensation of carbamoyl phosphate and aspartate to form carbamoyl aspartate and inorganic phosphate, the committed step in the de novo pyrimidine nucleotide biosynthesis pathway. The polypeptide is Aspartate carbamoyltransferase catalytic subunit (Lactobacillus delbrueckii subsp. bulgaricus (strain ATCC BAA-365 / Lb-18)).